A 221-amino-acid chain; its full sequence is Deoxyribose-phosphate aldolase (221 aa).

D96 functions as the Proton donor/acceptor in the catalytic mechanism. Residue K157 is the Schiff-base intermediate with acetaldehyde of the active site. Residue K185 is the Proton donor/acceptor of the active site.

This sequence belongs to the DeoC/FbaB aldolase family. DeoC type 1 subfamily.

It localises to the cytoplasm. It carries out the reaction 2-deoxy-D-ribose 5-phosphate = D-glyceraldehyde 3-phosphate + acetaldehyde. The protein operates within carbohydrate degradation; 2-deoxy-D-ribose 1-phosphate degradation; D-glyceraldehyde 3-phosphate and acetaldehyde from 2-deoxy-alpha-D-ribose 1-phosphate: step 2/2. Functionally, catalyzes a reversible aldol reaction between acetaldehyde and D-glyceraldehyde 3-phosphate to generate 2-deoxy-D-ribose 5-phosphate. The sequence is that of Deoxyribose-phosphate aldolase from Crocosphaera subtropica (strain ATCC 51142 / BH68) (Cyanothece sp. (strain ATCC 51142)).